Reading from the N-terminus, the 175-residue chain is MKSSIFVACFITFIIFHSSQAQTPRENFLNAHNAARRRVGVGPMTWDDGLAAYAQNYANQRADDCGMIHSDGPYGENLAAAFPQLNAAGAVKMWDDEKQWYDYNSNTCAPGKVCGHYTQVVWRKSVRLGCARVRCNSGWVFITCNYDPPGNYIDNVYGDLEEQKPDFDSKLELPN.

The first 21 residues, 1 to 21, serve as a signal peptide directing secretion; it reads MKSSIFVACFITFIIFHSSQA. The SCP domain occupies 29 to 146; sequence LNAHNAARRR…SGWVFITCNY (118 aa). Intrachain disulfides connect cysteine 65/cysteine 135, cysteine 108/cysteine 114, and cysteine 130/cysteine 144.

The protein belongs to the CRISP family.

In terms of biological role, probably involved in the defense reaction of plants against pathogens. This is Pathogenesis-related protein 1A1 from Solanum lycopersicum (Tomato).